Reading from the N-terminus, the 434-residue chain is ATP-dependent RNA helicase RhlB (434 aa).

Residues 9-37 (KKFADFPLKPEILAALNENGFEFCTPIQA) carry the Q motif motif. One can recognise a Helicase ATP-binding domain in the interval 40 to 219 (LPILLNAKDI…YDHMNDPEKV (180 aa)). 53 to 60 (AQTGTGKT) serves as a coordination point for ATP. The DEAD box signature appears at 165-168 (DEAD). One can recognise a Helicase C-terminal domain in the interval 243-390 (KMRLLLSLIE…VSNYDKDALL (148 aa)). The segment at 390 to 434 (LDDIPPPARIHRKPPTSRTRDGGSKGAHRSGGNTSRPPRHRTRRP) is disordered.

It belongs to the DEAD box helicase family. RhlB subfamily. As to quaternary structure, component of the RNA degradosome, which is a multiprotein complex involved in RNA processing and mRNA degradation.

The protein localises to the cytoplasm. The catalysed reaction is ATP + H2O = ADP + phosphate + H(+). Its function is as follows. DEAD-box RNA helicase involved in RNA degradation. Has RNA-dependent ATPase activity and unwinds double-stranded RNA. The protein is ATP-dependent RNA helicase RhlB of Shewanella frigidimarina (strain NCIMB 400).